A 58-amino-acid polypeptide reads, in one-letter code: Large ribosomal subunit protein bL32c (58 aa).

Disordered regions lie at residues 1 to 21 and 34 to 58; these read MAVP…SQWM and LAGR…MQPN. The segment covering 44 to 58 has biased composition (low complexity); that stretch reads QMQPTQMQPTQMQPN.

It belongs to the bacterial ribosomal protein bL32 family.

Its subcellular location is the plastid. The protein localises to the chloroplast. This is Large ribosomal subunit protein bL32c from Cyanidioschyzon merolae (strain NIES-3377 / 10D) (Unicellular red alga).